Here is a 245-residue protein sequence, read N- to C-terminus: tRNA1(Val) (adenine(37)-N6)-methyltransferase (245 aa).

The protein belongs to the methyltransferase superfamily. tRNA (adenine-N(6)-)-methyltransferase family.

The protein resides in the cytoplasm. The enzyme catalyses adenosine(37) in tRNA1(Val) + S-adenosyl-L-methionine = N(6)-methyladenosine(37) in tRNA1(Val) + S-adenosyl-L-homocysteine + H(+). Its function is as follows. Specifically methylates the adenine in position 37 of tRNA(1)(Val) (anticodon cmo5UAC). The protein is tRNA1(Val) (adenine(37)-N6)-methyltransferase of Klebsiella pneumoniae subsp. pneumoniae (strain ATCC 700721 / MGH 78578).